The chain runs to 3147 residues: Probable polyketide synthase 1 (3147 aa).

Residues Ser12–Glu457 enclose the Ketosynthase family 3 (KS3) domain. Residues Cys180 and His319 each act as for beta-ketoacyl synthase activity in the active site. The disordered stretch occupies residues Gln345–Leu369. Residues Asn354–Thr364 show a composition bias toward acidic residues. Residue His380 is the For beta-ketoacyl synthase activity of the active site. The acyl/malonyl transferase stretch occupies residues Gly672 to Tyr705. Ser682 (for acyl/malonyl transferase activity) is an active-site residue. The interval Asn976–Pro1127 is N-terminal hotdog fold. Residues Asn976 to Lys1298 enclose the PKS/mFAS DH domain. The active-site Proton acceptor; for dehydratase activity is the His1014. Positions Asp1149 to Lys1298 are C-terminal hotdog fold. Catalysis depends on Asp1209, which acts as the Proton donor; for dehydratase activity. The Carrier domain maps to Ser2568 to Ser2645. Ser2605 is subject to O-(pantetheine 4'-phosphoryl)serine. Residues Pro2723 to Leu2747 are disordered. Over residues Ser2738–Leu2747 the composition is skewed to polar residues. The tract at residues Val2789 to Val3147 is chalcone synthase. Cys2930 is an active-site residue.

This sequence in the C-terminal section; belongs to the thiolase-like superfamily. Chalcone/stilbene synthases family. In terms of assembly, homodimer. It depends on pantetheine 4'-phosphate as a cofactor.

It carries out the reaction (E)-4-coumaroyl-CoA + 3 malonyl-CoA + 3 H(+) = 2',4,4',6'-tetrahydroxychalcone + 3 CO2 + 4 CoA. The protein operates within secondary metabolite biosynthesis; flavonoid biosynthesis. Probable polyketide synthase. Produces only acylpyrones; in vitro. This chain is Probable polyketide synthase 1 (stlA), found in Dictyostelium discoideum (Social amoeba).